The primary structure comprises 290 residues: Acetyl-coenzyme A carboxylase carboxyl transferase subunit beta (290 aa).

The CoA carboxyltransferase N-terminal domain maps to 30–290 (IMTKCPKCKK…HAGQEVNKDA (261 aa)). 4 residues coordinate Zn(2+): C34, C37, C53, and C56. Residues 34-56 (CPKCKKIMYTKELSENLNVCFNC) form a C4-type zinc finger.

It belongs to the AccD/PCCB family. In terms of assembly, acetyl-CoA carboxylase is a heterohexamer composed of biotin carboxyl carrier protein (AccB), biotin carboxylase (AccC) and two subunits each of ACCase subunit alpha (AccA) and ACCase subunit beta (AccD). The cofactor is Zn(2+).

The protein localises to the cytoplasm. It carries out the reaction N(6)-carboxybiotinyl-L-lysyl-[protein] + acetyl-CoA = N(6)-biotinyl-L-lysyl-[protein] + malonyl-CoA. Its pathway is lipid metabolism; malonyl-CoA biosynthesis; malonyl-CoA from acetyl-CoA: step 1/1. Component of the acetyl coenzyme A carboxylase (ACC) complex. Biotin carboxylase (BC) catalyzes the carboxylation of biotin on its carrier protein (BCCP) and then the CO(2) group is transferred by the transcarboxylase to acetyl-CoA to form malonyl-CoA. This is Acetyl-coenzyme A carboxylase carboxyl transferase subunit beta from Staphylococcus carnosus (strain TM300).